We begin with the raw amino-acid sequence, 361 residues long: Cytochrome c peroxidase, mitochondrial (361 aa).

A mitochondrion-targeting transit peptide spans 1–67 (MTTAVRLLPS…NWGKAAALAS (67 aa)). The Proton acceptor role is filled by histidine 119. Tyrosine 220 is subject to Phosphotyrosine. Histidine 242 provides a ligand contact to heme b. Tryptophan 258 (tryptophan radical intermediate) is an active-site residue.

The protein belongs to the peroxidase family. Cytochrome c peroxidase subfamily. As to quaternary structure, forms a one-to-one complex with cytochrome c. Requires heme b as cofactor. Post-translationally, CCP1 precursor is processed by the rhomboid protease PCP1, which cleaves the N-terminal hydrophobic transit peptide. The m-AAA protease (composed of YTA12/RCA1 and YTA10/AFG3) is required for CCP1 maturation: m-AAA protease promotes membrane dislocation of the CCP1 transmembrane segment within the transit peptide to ensure the correct positioning of CCP1 within the membrane bilayer, allowing intramembrane cleavage by PCP1.

It localises to the mitochondrion matrix. It is found in the mitochondrion intermembrane space. The catalysed reaction is 2 Fe(II)-[cytochrome c] + H2O2 + 2 H(+) = 2 Fe(III)-[cytochrome c] + 2 H2O. In terms of biological role, destroys radicals which are normally produced within the cells and which are toxic to biological systems. This Saccharomyces cerevisiae (strain ATCC 204508 / S288c) (Baker's yeast) protein is Cytochrome c peroxidase, mitochondrial (CCP1).